Here is a 240-residue protein sequence, read N- to C-terminus: Orotidine 5'-phosphate decarboxylase (240 aa).

Substrate is bound by residues Asp-19, Lys-41, 68–77, Thr-123, Arg-184, Gln-193, Gly-213, and Arg-214; that span reads DYKYYDIEET. Lys-70 functions as the Proton donor in the catalytic mechanism.

Belongs to the OMP decarboxylase family. Type 1 subfamily. In terms of assembly, homodimer.

It carries out the reaction orotidine 5'-phosphate + H(+) = UMP + CO2. Its pathway is pyrimidine metabolism; UMP biosynthesis via de novo pathway; UMP from orotate: step 2/2. Catalyzes the decarboxylation of orotidine 5'-monophosphate (OMP) to uridine 5'-monophosphate (UMP). The protein is Orotidine 5'-phosphate decarboxylase of Nitrobacter winogradskyi (strain ATCC 25391 / DSM 10237 / CIP 104748 / NCIMB 11846 / Nb-255).